A 217-amino-acid polypeptide reads, in one-letter code: Probable transaldolase (217 aa).

K83 acts as the Schiff-base intermediate with substrate in catalysis.

Belongs to the transaldolase family. Type 3B subfamily.

It is found in the cytoplasm. It carries out the reaction D-sedoheptulose 7-phosphate + D-glyceraldehyde 3-phosphate = D-erythrose 4-phosphate + beta-D-fructose 6-phosphate. The protein operates within carbohydrate degradation; pentose phosphate pathway; D-glyceraldehyde 3-phosphate and beta-D-fructose 6-phosphate from D-ribose 5-phosphate and D-xylulose 5-phosphate (non-oxidative stage): step 2/3. Functionally, transaldolase is important for the balance of metabolites in the pentose-phosphate pathway. This is Probable transaldolase from Novosphingobium aromaticivorans (strain ATCC 700278 / DSM 12444 / CCUG 56034 / CIP 105152 / NBRC 16084 / F199).